A 64-amino-acid chain; its full sequence is Prokaryotic ubiquitin-like protein Pup (64 aa).

The disordered stretch occupies residues 1–37 (MAQEQTQRAGGGEDDETTGGDGSAGQERREKLAAETD). The ARC ATPase binding stretch occupies residues 21–58 (DGSAGQERREKLAAETDDLLDEIDDVLEENAEDFVRAY). Residues 24-52 (AGQERREKLAAETDDLLDEIDDVLEENAE) are a coiled coil. The residue at position 64 (Q64) is a Deamidated glutamine. Q64 is covalently cross-linked (Isoglutamyl lysine isopeptide (Gln-Lys) (interchain with K-? in acceptor proteins)).

It belongs to the prokaryotic ubiquitin-like protein family. Strongly interacts with the proteasome-associated ATPase ARC through a hydrophobic interface; the interacting region of Pup lies in its C-terminal half. There is one Pup binding site per ARC hexamer ring. In terms of processing, is modified by deamidation of its C-terminal glutamine to glutamate by the deamidase Dop, a prerequisite to the subsequent pupylation process.

Its pathway is protein degradation; proteasomal Pup-dependent pathway. Its function is as follows. Protein modifier that is covalently attached to lysine residues of substrate proteins, thereby targeting them for proteasomal degradation. The tagging system is termed pupylation. The sequence is that of Prokaryotic ubiquitin-like protein Pup from Rhodococcus erythropolis (strain PR4 / NBRC 100887).